The following is a 483-amino-acid chain: PAT complex subunit CCDC47 (483 aa).

A signal peptide spans 1–20; it reads MKAFYAFCVVLLVFGSVSEA. Residues 21–135 are Cytoplasmic-facing; that stretch reads KFDDFEDEED…PAHLQNSWES (115 aa). Residues 46 to 119 are disordered; the sequence is MEDSVTESPQ…DTSSNKNKDP (74 aa). Positions 60–104 are enriched in acidic residues; sequence TEDDEDEATVELEGQDESQEGDFEDADTQEGDTESEPYDDEEFEG. A compositionally biased stretch (basic and acidic residues) spans 105-118; the sequence is YEDKPDTSSNKNKD. Residues 136–156 traverse the membrane as a helical segment; the sequence is YYLEILMVTGLLAYIMNYIIG. Residues 157-483 lie on the Lumenal side of the membrane; that stretch reads KNKNSRLAQA…KMKQIKVKAM (327 aa). N-linked (GlcNAc...) asparagine glycosylation occurs at Asn-178. The disordered stretch occupies residues 424-483; that stretch reads QRQEAAQSRREEKKRAEKERIMNEEDPEKQRRLEEAALRREQKKLEKKQMKMKQIKVKAM. The span at 430-472 shows a compositional bias: basic and acidic residues; sequence QSRREEKKRAEKERIMNEEDPEKQRRLEEAALRREQKKLEKKQ. Residues 450 to 483 are a coiled coil; sequence PEKQRRLEEAALRREQKKLEKKQMKMKQIKVKAM. A compositionally biased stretch (basic residues) spans 473 to 483; the sequence is MKMKQIKVKAM.

It belongs to the CCDC47 family. As to quaternary structure, component of the PAT complex, composed of WDR83OS/Asterix and CCDC47. The PAT complex is part of the multi-pass translocon (MPT) complex, composed of three subcomplexes, the GEL complex (composed of RAB5IF/OPTI and TMCO1), the BOS complex (composed of NCLN/Nicalin, NOMO1 and TMEM147) and the PAT complex (composed of WDR83OS/Asterix and CCDC47). The MPT complex associates with the SEC61 complex. Interacts with VCP, HSPA5, DERL1, DERL2 and SELENOS. In the embryo, expressed in the endodermal layer of the yolk sac and in the small intestine.

The protein localises to the endoplasmic reticulum membrane. The protein resides in the rough endoplasmic reticulum membrane. Functionally, component of the multi-pass translocon (MPT) complex that mediates insertion of multi-pass membrane proteins into the lipid bilayer of membranes. The MPT complex takes over after the SEC61 complex: following membrane insertion of the first few transmembrane segments of proteins by the SEC61 complex, the MPT complex occludes the lateral gate of the SEC61 complex to promote insertion of subsequent transmembrane regions. Within the MPT complex, the PAT subcomplex sequesters any highly polar regions in the transmembrane domains away from the non-polar membrane environment until they can be buried in the interior of the fully assembled protein. Within the PAT subcomplex, CCDC47 occludes the lateral gate of the SEC61 complex. Involved in the regulation of calcium ion homeostasis in the ER. Required for proper protein degradation via the ERAD (ER-associated degradation) pathway. Has an essential role in the maintenance of ER organization during embryogenesis. The polypeptide is PAT complex subunit CCDC47 (Mus musculus (Mouse)).